The following is a 279-amino-acid chain: Bifunctional protein FolD (279 aa).

Residues 164–166, Ser-189, and Ile-230 contribute to the NADP(+) site; that span reads GRS.

Belongs to the tetrahydrofolate dehydrogenase/cyclohydrolase family. Homodimer.

The catalysed reaction is (6R)-5,10-methylene-5,6,7,8-tetrahydrofolate + NADP(+) = (6R)-5,10-methenyltetrahydrofolate + NADPH. It catalyses the reaction (6R)-5,10-methenyltetrahydrofolate + H2O = (6R)-10-formyltetrahydrofolate + H(+). It participates in one-carbon metabolism; tetrahydrofolate interconversion. In terms of biological role, catalyzes the oxidation of 5,10-methylenetetrahydrofolate to 5,10-methenyltetrahydrofolate and then the hydrolysis of 5,10-methenyltetrahydrofolate to 10-formyltetrahydrofolate. This chain is Bifunctional protein FolD, found in Agathobacter rectalis (strain ATCC 33656 / DSM 3377 / JCM 17463 / KCTC 5835 / VPI 0990) (Eubacterium rectale).